Here is a 215-residue protein sequence, read N- to C-terminus: 3-demethoxyubiquinol 3-hydroxylase (215 aa).

Residues Glu-64, Glu-94, His-97, Glu-146, Glu-178, and His-181 each coordinate Fe cation.

This sequence belongs to the COQ7 family. It depends on Fe cation as a cofactor.

The protein localises to the cell membrane. It catalyses the reaction a 5-methoxy-2-methyl-3-(all-trans-polyprenyl)benzene-1,4-diol + AH2 + O2 = a 3-demethylubiquinol + A + H2O. It participates in cofactor biosynthesis; ubiquinone biosynthesis. Its function is as follows. Catalyzes the hydroxylation of 2-nonaprenyl-3-methyl-6-methoxy-1,4-benzoquinol during ubiquinone biosynthesis. In Bordetella avium (strain 197N), this protein is 3-demethoxyubiquinol 3-hydroxylase.